We begin with the raw amino-acid sequence, 198 residues long: GTP-binding protein Di-Ras1 (198 aa).

GTP is bound by residues 17–22, 33–39, 61–65, 121–125, A151, and 151–152; these read GVGKSS, RDTYIPT, DTTGS, NKCDE, and AK. Positions 36-44 match the Effector region motif; the sequence is YIPTIEDTY. C195 is subject to Cysteine methyl ester. A lipid anchor (S-geranylgeranyl cysteine) is attached at C195. Residues 196–198 constitute a propeptide, removed in mature form; that stretch reads ALM.

The protein belongs to the small GTPase superfamily. Di-Ras family.

The protein localises to the cell membrane. In terms of biological role, displays low GTPase activity and exists predominantly in the GTP-bound form. The sequence is that of GTP-binding protein Di-Ras1 (Diras1) from Mus musculus (Mouse).